Reading from the N-terminus, the 237-residue chain is Glutathione-independent glyoxalase HSP31 (237 aa).

Residues Cys138, His139, and Glu170 contribute to the active site. Cys138 is subject to Cysteine sulfinic acid (-SO2H).

Belongs to the peptidase C56 family. HSP31-like subfamily. As to quaternary structure, homodimer. Post-translationally, cys-138 is easily oxidized to sulfinic acid.

It localises to the cytoplasm. It is found in the P-body. It carries out the reaction methylglyoxal + H2O = (R)-lactate + H(+). Catalyzes the conversion of methylglyoxal (MG) to D-lactate in a single glutathione (GSH)-independent step. May play a role in detoxifying endogenously produced glyoxals. Involved in protection against reactive oxygen species (ROS). Important for viability in stationary phase. May negatively regulate TORC1 in response to nutrient limitation. The chain is Glutathione-independent glyoxalase HSP31 from Saccharomyces cerevisiae (strain ATCC 204508 / S288c) (Baker's yeast).